The sequence spans 638 residues: MIPNGSLNFEDEQFIESSVAKLNALRKSGQFCDVKLQVCGHEMLAHRAVLACCSPFLFEIFNSDSESNGISLVRFDDLNPEAVEVLLNYAYTSQLKAETDLVKDVYSAAKKLKIDRVKQVCGDYLISKIDAQSGISCRNFVNTMGDWRLLTKIDNYIQEHLLEISEQDDFLKLPRLNLEIMLEENVSLPSNGKLYTKVINWVQRSIWENGENLDALMEEVQTLYYSADHKLLDGSSLGEHTEAHEDNIQLIQKKSPRENNHKNLISSSSGSLSPSALIQCPKHEWKIIASEKKTNNTYLCLAVLNSTLCVIFLHGRNSPVNSPSSTPRLTKSLSLEIQPEDSLERVMSPMHYARSGLGTAELNGKLIAAGGYNREECLRTVECYDLETDIWTFIAPMKTPRARFQMAVLMDHLYVVGGSNGHSDDLSCGEKYDPKSNIWTPVPELRSNRCNAGVCALNGNLYVVGGSDPYGQKGLKNCDVFNPITRMWTCCAQLNIRRHQPAVCELGNKIYIIGGAESWNCLNSVECYNPQNDTWTLVAPMNVARRGSGVAVYDGKLLVVGGFDGTHALCCVESYNPERNEWKMVGSMTSSRSNAGVVAVGNQIYAAGGFDGNEFLNTVEVYNPQTDEWSPFTQLCES.

The BTB domain maps to 32–99 (CDVKLQVCGH…AYTSQLKAET (68 aa)). Residues 134 to 233 (GISCRNFVNT…YYSADHKLLD (100 aa)) enclose the BACK domain. The disordered stretch occupies residues 251 to 273 (IQKKSPRENNHKNLISSSSGSLS). Kelch repeat units follow at residues 365 to 411 (KLIA…VLMD), 412 to 459 (HLYV…ALNG), 461 to 508 (LYVV…ELGN), 509 to 555 (KIYI…VYDG), 557 to 602 (LLVV…AVGN), and 604 to 638 (IYAA…LCES).

The protein localises to the cytoplasm. It localises to the cytoskeleton. It is found in the nucleus. Functionally, plays a role in cell division and in the dynamic organization of the actin skeleton as a stabilizer of actin filaments by association with F-actin through Kelch repeats. The chain is Influenza virus NS1A-binding protein homolog (ivns1abp) from Xenopus laevis (African clawed frog).